Here is a 63-residue protein sequence, read N- to C-terminus: Large ribosomal subunit protein bL35 (63 aa).

A compositionally biased stretch (basic residues) spans 1 to 43 (MKMRTHSGAKKRLKVLSSGKVKKKSTRMRHLNSHMSSKTKRQL). The tract at residues 1-45 (MKMRTHSGAKKRLKVLSSGKVKKKSTRMRHLNSHMSSKTKRQLGK) is disordered.

Belongs to the bacterial ribosomal protein bL35 family.

This chain is Large ribosomal subunit protein bL35, found in Bdellovibrio bacteriovorus (strain ATCC 15356 / DSM 50701 / NCIMB 9529 / HD100).